Reading from the N-terminus, the 650-residue chain is Putative pumilio homolog 7, chloroplastic (650 aa).

Disordered stretches follow at residues 1 to 22 (MDEF…RTPL) and 200 to 235 (NDDK…GQEI). The transit peptide at 1–77 (MDEFREASSV…SPPFNGIIPK (77 aa)) directs the protein to the chloroplast. 2 stretches are compositionally biased toward low complexity: residues 8-22 (SSVS…RTPL) and 217-232 (PSYS…YNNG). The 343-residue stretch at 308–650 (SNTRALMSNN…RIFSRNLLKK (343 aa)) folds into the PUM-HD domain. Pumilio repeat units lie at residues 333 to 368 (DIQG…IIFN), 369 to 404 (EVIA…QIVL), 408 to 443 (EEPG…SLVK), 445 to 480 (ALRP…FIFD), 481 to 516 (AATK…KLIA), 517 to 552 (EISR…MMLA), 553 to 591 (QLKG…ELVS), and 594 to 625 (HFDQ…SLVE).

Its subcellular location is the plastid. The protein localises to the chloroplast. It localises to the cytoplasm. Sequence-specific RNA-binding protein that regulates translation and mRNA stability by binding the 3'-UTR of target mRNAs. This chain is Putative pumilio homolog 7, chloroplastic (APUM7), found in Arabidopsis thaliana (Mouse-ear cress).